Reading from the N-terminus, the 110-residue chain is UPF0060 membrane protein Swit_0423 (110 aa).

A run of 4 helical transmembrane segments spans residues 6 to 26, 29 to 49, 61 to 81, and 90 to 110; these read LFIF…FWAW, LGKS…FAWL, AFAA…WAVE, and LIGV…PRTA.

Belongs to the UPF0060 family.

The protein resides in the cell inner membrane. The polypeptide is UPF0060 membrane protein Swit_0423 (Rhizorhabdus wittichii (strain DSM 6014 / CCUG 31198 / JCM 15750 / NBRC 105917 / EY 4224 / RW1) (Sphingomonas wittichii)).